Here is a 269-residue protein sequence, read N- to C-terminus: GTP cyclohydrolase FolE2 (269 aa).

This sequence belongs to the GTP cyclohydrolase IV family.

The enzyme catalyses GTP + H2O = 7,8-dihydroneopterin 3'-triphosphate + formate + H(+). It participates in cofactor biosynthesis; 7,8-dihydroneopterin triphosphate biosynthesis; 7,8-dihydroneopterin triphosphate from GTP: step 1/1. In terms of biological role, converts GTP to 7,8-dihydroneopterin triphosphate. The polypeptide is GTP cyclohydrolase FolE2 (Thiobacillus denitrificans (strain ATCC 25259 / T1)).